Reading from the N-terminus, the 159-residue chain is 3-hydroxyacyl-[acyl-carrier-protein] dehydratase FabZ (159 aa).

Residue histidine 58 is part of the active site.

The protein belongs to the thioester dehydratase family. FabZ subfamily.

Its subcellular location is the cytoplasm. It carries out the reaction a (3R)-hydroxyacyl-[ACP] = a (2E)-enoyl-[ACP] + H2O. Its function is as follows. Involved in unsaturated fatty acids biosynthesis. Catalyzes the dehydration of short chain beta-hydroxyacyl-ACPs and long chain saturated and unsaturated beta-hydroxyacyl-ACPs. The polypeptide is 3-hydroxyacyl-[acyl-carrier-protein] dehydratase FabZ (Helicobacter pylori (strain ATCC 700392 / 26695) (Campylobacter pylori)).